A 334-amino-acid chain; its full sequence is Tryptophan--tRNA ligase (334 aa).

ATP is bound by residues 11 to 13 (QPS) and 19 to 20 (GN). Positions 12-20 (PSGELTIGN) match the 'HIGH' region motif. An L-tryptophan-binding site is contributed by Asp-135. Residues 147–149 (GED), Val-186, and 195–199 (KMSKS) contribute to the ATP site. A 'KMSKS' region motif is present at residues 195-199 (KMSKS).

The protein belongs to the class-I aminoacyl-tRNA synthetase family. In terms of assembly, homodimer.

The protein localises to the cytoplasm. The enzyme catalyses tRNA(Trp) + L-tryptophan + ATP = L-tryptophyl-tRNA(Trp) + AMP + diphosphate + H(+). Catalyzes the attachment of tryptophan to tRNA(Trp). This is Tryptophan--tRNA ligase from Shigella flexneri.